Here is a 727-residue protein sequence, read N- to C-terminus: NADH-ubiquinone oxidoreductase 75 kDa subunit, mitochondrial (727 aa).

Residues 1–23 (MLRIPVRKALVGLSKSSKGCVRT) constitute a mitochondrion transit peptide. In terms of domain architecture, 2Fe-2S ferredoxin-type spans 30–108 (NLIEVFVDGQ…GWNILTNSEK (79 aa)). Positions 64, 75, and 78 each coordinate [2Fe-2S] cluster. Position 84 is an N6-acetyllysine (lysine 84). Position 92 (cysteine 92) interacts with [2Fe-2S] cluster. The region spanning 108–147 (KTKKAREGVMEFLLANHPLDCPICDQGGECDLQDQSMMFG) is the 4Fe-4S His(Cys)3-ligated-type domain. The [4Fe-4S] cluster site is built by histidine 124, cysteine 128, cysteine 131, cysteine 137, cysteine 176, cysteine 179, cysteine 182, and cysteine 226. The 4Fe-4S Mo/W bis-MGD-type domain maps to 245 to 301 (TRKTESIDVMDAVGSNIVVSTRTGEVMRILPRMHEDINEEWISDKTRFAYDGLKRQR). Residues lysine 499 and lysine 709 each carry the N6-acetyllysine modification.

Belongs to the complex I 75 kDa subunit family. Core subunit of respiratory chain NADH dehydrogenase (Complex I) which is composed of 45 different subunits. This is the largest subunit of complex I and it is a component of the iron-sulfur (IP) fragment of the enzyme. Complex I associates with ubiquinol-cytochrome reductase complex (Complex III) to form supercomplexes. Interacts with MDM2 and AKAP1. [2Fe-2S] cluster is required as a cofactor. It depends on [4Fe-4S] cluster as a cofactor.

Its subcellular location is the mitochondrion inner membrane. It catalyses the reaction a ubiquinone + NADH + 5 H(+)(in) = a ubiquinol + NAD(+) + 4 H(+)(out). Its function is as follows. Core subunit of the mitochondrial membrane respiratory chain NADH dehydrogenase (Complex I) which catalyzes electron transfer from NADH through the respiratory chain, using ubiquinone as an electron acceptor. Essential for catalysing the entry and efficient transfer of electrons within complex I. Plays a key role in the assembly and stability of complex I and participates in the association of complex I with ubiquinol-cytochrome reductase complex (Complex III) to form supercomplexes. This chain is NADH-ubiquinone oxidoreductase 75 kDa subunit, mitochondrial (NDUFS1), found in Bos taurus (Bovine).